We begin with the raw amino-acid sequence, 4834 residues long: E3 ubiquitin-protein ligase HERC2 (4834 aa).

Positions 50–88 are disordered; the sequence is TESTQNGELPPRKDDSVEPSGTKKEDLNDKEKKDEEETP. Basic and acidic residues predominate over residues 59–84; the sequence is PPRKDDSVEPSGTKKEDLNDKEKKDE. At Thr-272 the chain carries Phosphothreonine. The RCC1 1-1 repeat unit spans residues 415-461; that stretch reads PTSHKGSLQEVIGWGLIGWKYYANVIGPIQCEGLANLGVTQIACAEK. Residues 462–512 form an RCC1 1-2 repeat; it reads RFLILSRNGRVYTQAYNSDTLAPQLVQGLASRNIVKIAAHSDGHHYLALAA. The stretch at 513–568 is one RCC1 1-3 repeat; it reads TGEVYSWGCGDGGRLGHGDTVPLEEPKVISAFSGKQAGKHVVHIACGSTYSAAITA. One copy of the RCC1 1-4 repeat lies at 569 to 620; it reads EGELYTWGRGNYGRLGHGSSEDEAIPMLVAGLKGLKVIDVACGSGDAQTLAV. The RCC1 1-5 repeat unit spans residues 623–674; that stretch reads NGQVWSWGDGDYGKLGRGGSDGCKTPKLIEKLQDLDVVKVRCGSQFSIALTK. Thr-647 is subject to Phosphothreonine. The stretch at 675–726 is one RCC1 1-6 repeat; sequence DGQVYSWGKGDNQRLGHGTEEHVRYPKLLEGLQGKKVIDVAAGSTHCLALTE. Residues 728–778 form an RCC1 1-7 repeat; sequence SEVHSWGSNDQCQHFDTLRVTKPEPAALPGLDTKHIVGIACGPAQSFAWSS. A coiled-coil region spans residues 948–980; that stretch reads LHAAITAEIQDIEAKKEAQKEKEIDEQEANAST. The 77-residue stretch at 1207–1283 folds into the Cytochrome b5 heme-binding domain; the sequence is VTLIRKADLE…MHAFCVGQYL (77 aa). The segment at 1555-1575 is disordered; sequence RKKRVPKKPESTDDEEKIGNE. The segment covering 1566–1575 has biased composition (acidic residues); that stretch reads TDDEEKIGNE. Ser-1577 carries the post-translational modification Phosphoserine. One can recognise an MIB/HERC2 domain in the interval 1859–1932; it reads SGPELAAMMK…KYDLKLAELP (74 aa). The interval 1933-1958 is disordered; it reads AAAQPSAEDSDTEDDSEAEQTERNIH. Residues 1940–1951 are compositionally biased toward acidic residues; that stretch reads EDSDTEDDSEAE. Position 1942 is a phosphoserine (Ser-1942). A Phosphothreonine modification is found at Thr-1944. Ser-2454 is subject to Phosphoserine. The CPH domain occupies 2554 to 2630; sequence RADFLSNDDY…RYIHVELIGY (77 aa). The segment at 2703-2755 adopts a ZZ-type zinc-finger fold; sequence HPGVTCDGCQMFPINGSRFKCRNCDDFDFCETCFKTKKHNTRHTFGRINEPGQ. Cys-2708, Cys-2711, Cys-2723, Cys-2726, Cys-2732, Cys-2735, His-2741, and His-2745 together coordinate Zn(2+). A DOC domain is found at 2759–2936; sequence FCGRSGKQLK…ASDNEEEEDE (178 aa). Ser-2928 is modified (phosphoserine). Residues 2958–3009 form an RCC1 2-1 repeat; the sequence is RTKVFVWGLNDKDQLGGLKGSKIKVPSFSETLSALNVVQVAGGSKSLFAVTV. The stretch at 3010-3064 is one RCC1 2-2 repeat; it reads EGKVYACGEATNGRLGLGISSGTVPIPRQITALSSYVVKKVAVHSGGRHATALTV. One copy of the RCC1 2-3 repeat lies at 3065-3116; it reads DGKVFSWGEGDDGKLGHFSRMNCDKPRLIEALKTKRIRDIACGSSHSAALTS. Residues 3118–3168 form an RCC1 2-4 repeat; it reads GELYTWGLGEYGRLGHGDNTTQLKPKMVKVLLGHRVIQVACGSRDAQTLAL. Residues 3171–3222 form an RCC1 2-5 repeat; sequence EGLVFSWGDGDFGKLGRGGSEGCNIPQNIERLNGQGVCQIECGAQFSLALTK. An RCC1 2-6 repeat occupies 3224–3274; that stretch reads GVVWTWGKGDYFRLGHGSDVHVRKPQVVEGLRGKKIVHVAVGALHCLAVTD. The RCC1 2-7 repeat unit spans residues 3275 to 3326; that stretch reads SGQVYAWGDNDHGQQGNGTTTVNRKPTLVQGLEGQKITRVACGSSHSVAWTT. Polar residues-rich tracts occupy residues 3602–3611 and 3618–3629; these read SQSGRLSSQP and HPYTDDTSTSGT. A disordered region spans residues 3602-3629; that stretch reads SQSGRLSSQPVVVESSHPYTDDTSTSGT. One copy of the RCC1 3-1 repeat lies at 3951 to 4002; that stretch reads SGTIYGWGHNHRGQLGGIEGAKVKVPTPCEALATLRPVQLIGGEQTLFAVTA. An RCC1 3-2 repeat occupies 4004-4056; it reads GKLYATGYGAGGRLGIGGTESVSTPTLLESIQHVFIKKVAVNSGGKHCLALSS. The RCC1 3-3 repeat unit spans residues 4058–4108; it reads GEVYSWGEAEDGKLGHGNRSPCDRPRVIESLRGIEVVDVAAGGAHSACVTA. One copy of the RCC1 3-4 repeat lies at 4110–4162; sequence GDLYTWGKGRYGRLGHSDSEDQLKPKLVEALQGHRVVDIACGSGDAQTLCLTD. The RCC1 3-5 repeat unit spans residues 4164–4214; that stretch reads DTVWSWGDGDYGKLGRGGSDGCKVPMKIDSLTGLGVVKVECGSQFSVALTK. An RCC1 3-6 repeat occupies 4216-4266; the sequence is GAVYTWGKGDYHRLGHGSDDHVRRPRQVQGLQGKKVIAIATGSLHCVCCTE. Residues 4268 to 4318 form an RCC1 3-7 repeat; it reads GEVYTWGDNDEGQLGDGTTNAIQRPRLVAALQGKKVNRVACGSAHTLAWST. Residues 4457–4794 form the HECT domain; sequence DSLLLPHRVW…IHFCKSIDTD (338 aa). Cys-4762 acts as the Glycyl thioester intermediate in catalysis. The interval 4804 to 4834 is disordered; that stretch reads EPAADDSSDDSDNEDVDSFASDSTQDYLTGH. Over residues 4806–4820 the composition is skewed to acidic residues; sequence AADDSSDDSDNEDVD. A phosphoserine mark is found at Ser-4810, Ser-4811, and Ser-4814. Over residues 4823–4834 the composition is skewed to polar residues; sequence ASDSTQDYLTGH. Thr-4827 carries the phosphothreonine modification.

As to quaternary structure, interacts (when phosphorylated at Thr-4827 and sumoylated) with RNF8 (via FHA domain); this interaction increases after ionizing radiation (IR) treatment. Interacts with XPA. Interacts with NEURL4. Via its interaction with NEURL4, may indirectly interact with CCP110 and CEP97. Phosphorylation at Thr-4827 is required for interaction with RNF8. Post-translationally, sumoylated with SUMO1 by PIAS4 in response to double-strand breaks (DSBs), promoting the interaction with RNF8.

The protein resides in the cytoplasm. Its subcellular location is the cytoskeleton. It localises to the microtubule organizing center. The protein localises to the centrosome. It is found in the centriole. The protein resides in the nucleus. The catalysed reaction is S-ubiquitinyl-[E2 ubiquitin-conjugating enzyme]-L-cysteine + [acceptor protein]-L-lysine = [E2 ubiquitin-conjugating enzyme]-L-cysteine + N(6)-ubiquitinyl-[acceptor protein]-L-lysine.. The protein operates within protein modification; protein ubiquitination. E3 ubiquitin-protein ligase that regulates ubiquitin-dependent retention of repair proteins on damaged chromosomes. Recruited to sites of DNA damage in response to ionizing radiation (IR) and facilitates the assembly of UBE2N and RNF8 promoting DNA damage-induced formation of 'Lys-63'-linked ubiquitin chains. Acts as a mediator of binding specificity between UBE2N and RNF8. Involved in the maintenance of RNF168 levels. E3 ubiquitin-protein ligase that promotes the ubiquitination and proteasomal degradation of XPA which influences the circadian oscillation of DNA excision repair activity. By controlling the steady-state expression of the IGF1R receptor, indirectly regulates the insulin-like growth factor receptor signaling pathway. Also modulates iron metabolism by regulating the basal turnover of FBXL5. The chain is E3 ubiquitin-protein ligase HERC2 from Homo sapiens (Human).